The sequence spans 438 residues: Methylenetetrahydrofolate--tRNA-(uracil-5-)-methyltransferase TrmFO (438 aa).

9–14 lines the FAD pocket; the sequence is GGGLAG.

It belongs to the MnmG family. TrmFO subfamily. It depends on FAD as a cofactor.

It localises to the cytoplasm. It carries out the reaction uridine(54) in tRNA + (6R)-5,10-methylene-5,6,7,8-tetrahydrofolate + NADH + H(+) = 5-methyluridine(54) in tRNA + (6S)-5,6,7,8-tetrahydrofolate + NAD(+). The catalysed reaction is uridine(54) in tRNA + (6R)-5,10-methylene-5,6,7,8-tetrahydrofolate + NADPH + H(+) = 5-methyluridine(54) in tRNA + (6S)-5,6,7,8-tetrahydrofolate + NADP(+). Its function is as follows. Catalyzes the folate-dependent formation of 5-methyl-uridine at position 54 (M-5-U54) in all tRNAs. This chain is Methylenetetrahydrofolate--tRNA-(uracil-5-)-methyltransferase TrmFO, found in Lactobacillus johnsonii (strain CNCM I-12250 / La1 / NCC 533).